A 259-amino-acid polypeptide reads, in one-letter code: Virion protein US10 homolog (259 aa).

Residues 162 to 174 (CAHWCCLGHAFGC) fold into a zinc finger.

Belongs to the herpesviridae US10 family. Post-translationally, phosphorylated.

The protein localises to the virion tegument. It is found in the host nucleus matrix. In Equine herpesvirus 4 (strain 1942) (EHV-4), this protein is Virion protein US10 homolog.